Consider the following 505-residue polypeptide: MAKFQGYLELDRFWKHDFLYPLIFREYIYAFAHDRGLNKSSLLENVGYDNKSSLLIVKRLITRMYQQNHLILVAHDSNQNNVFWSNKNLYSQLISEGFAVIVEIPFSIRLVSSLKGTEIVKYSNLRSIHSIFPFLEDKFPYLNSVSDVLIPYPIHLEILVQILRYWVKDASSLHLLRLFLHDYYNWNSLIISNKSISIFFKSNSRFFLFLYNSHVCEYESILLFIRNQSCHLRLTSSGSFFERIYFYEKIKHPIEEVFSNDFPAIPLFFQDPFMHYVRYQGKSILVSKDTPLLMNKWKYYLVHLWQCHFYVWSEPGRIHINQLSKHSLFFLGYLSSMRLNLSVVRSQMLENSFLMDNAMKKIDTLVPISPLIGSLAKMKFCNALGHPISKSTWADSSDLDIIDRFVRIWRNLFHYYSGSSKKKSLYRIKYILRVSCVKTLARKHKSTVRAFLKRLGSELLEEFFMEEEEVLSFIFPRTYYTLRRLYRGRIWYLDIFCINDFVNHE.

Belongs to the intron maturase 2 family. MatK subfamily.

The protein localises to the plastid. Its subcellular location is the chloroplast. In terms of biological role, usually encoded in the trnK tRNA gene intron. Probably assists in splicing its own and other chloroplast group II introns. This Ulmus parvifolia (Chinese elm) protein is Maturase K.